The following is a 398-amino-acid chain: ORC1-type DNA replication protein 1 (398 aa).

ATP-binding positions include threonine 67–alanine 71, tyrosine 208, and arginine 220.

It belongs to the CDC6/cdc18 family.

Functionally, involved in regulation of DNA replication. This Sulfurisphaera tokodaii (strain DSM 16993 / JCM 10545 / NBRC 100140 / 7) (Sulfolobus tokodaii) protein is ORC1-type DNA replication protein 1 (cdc6-1).